The primary structure comprises 428 residues: 3-phosphoshikimate 1-carboxyvinyltransferase (428 aa).

3-phosphoshikimate-binding residues include Lys-19, Ser-20, and Arg-24. Lys-19 is a phosphoenolpyruvate binding site. Residues Gly-91 and Arg-119 each contribute to the phosphoenolpyruvate site. 3-phosphoshikimate is bound by residues Ser-164, Gln-166, Asp-312, and Lys-339. Gln-166 is a phosphoenolpyruvate binding site. Asp-312 (proton acceptor) is an active-site residue. Residues Arg-343 and Arg-386 each coordinate phosphoenolpyruvate.

This sequence belongs to the EPSP synthase family. As to quaternary structure, monomer.

The protein localises to the cytoplasm. It carries out the reaction 3-phosphoshikimate + phosphoenolpyruvate = 5-O-(1-carboxyvinyl)-3-phosphoshikimate + phosphate. The protein operates within metabolic intermediate biosynthesis; chorismate biosynthesis; chorismate from D-erythrose 4-phosphate and phosphoenolpyruvate: step 6/7. Catalyzes the transfer of the enolpyruvyl moiety of phosphoenolpyruvate (PEP) to the 5-hydroxyl of shikimate-3-phosphate (S3P) to produce enolpyruvyl shikimate-3-phosphate and inorganic phosphate. This Bacillus velezensis (strain DSM 23117 / BGSC 10A6 / LMG 26770 / FZB42) (Bacillus amyloliquefaciens subsp. plantarum) protein is 3-phosphoshikimate 1-carboxyvinyltransferase.